The sequence spans 390 residues: MTQPLSQDQHDSSSNMPTDNAETQGYLSVADYDYDLPDEYIARYPLAERSASRLMYLPAQKENTAVIQDRQFSDLPELLQAGDLIVFNDTKVMKARLFGQKDTGGKVEVLVERLTDDTEFTTDESGQSFDNVALCHVRASKAPKLGQRLVLGDGNIECVMIGRHENLFILSFKNPILPDLEQYGELPIPPYFERHADETDNVRYQTVFHDPTKLASVAAPTASLHFDDKVLKQLADKGINTAYVTLHVGAGTFAPVKTDNLLNHTMHSEYANLPQATADLINQTHQNGNKVIAIGTTVTRVLETAYQKTADEHGHISTWSGDTDIFIYPGFKFGVIDKLLTNFHLPKSTLLMLVSAFAGKANIEQAYEHAVAQKYRFFSYGDAMLLERNL.

The disordered stretch occupies residues 1–22; it reads MTQPLSQDQHDSSSNMPTDNAE.

Belongs to the QueA family. As to quaternary structure, monomer.

The protein localises to the cytoplasm. The catalysed reaction is 7-aminomethyl-7-carbaguanosine(34) in tRNA + S-adenosyl-L-methionine = epoxyqueuosine(34) in tRNA + adenine + L-methionine + 2 H(+). It participates in tRNA modification; tRNA-queuosine biosynthesis. Functionally, transfers and isomerizes the ribose moiety from AdoMet to the 7-aminomethyl group of 7-deazaguanine (preQ1-tRNA) to give epoxyqueuosine (oQ-tRNA). This Psychrobacter sp. (strain PRwf-1) protein is S-adenosylmethionine:tRNA ribosyltransferase-isomerase.